The primary structure comprises 1318 residues: Major tegument protein (1318 aa).

It belongs to the herpesviridae MTP family. In terms of assembly, interacts with host DAXX; this interaction disrupts the chromatin remodeling complex ATRX:DAXX and thus allows viral transcription. Interacts with host SMC6; this interaction targets SMC5-SMC6 complex for proteasomal degradation.

The protein resides in the virion tegument. Its subcellular location is the host nucleus. Its function is as follows. Tegument protein that plays a role in the inhibition of host intrinsic defenses to promote viral early gene activation. Interacts with host DAXX and thereby disrupts the complex between DAXX and ATRX. Suppresses the DAXX-ATRX dependent deposition of histone H3.3 on viral chromatin allowing viral transcription. Targets also host SMC5/6 for proteasomal degradation in a CUL7 and calpain-dependent manner to support nuclear membrane-less replication compartment formation and lytic virus replication. The sequence is that of Major tegument protein from Epstein-Barr virus (strain GD1) (HHV-4).